Reading from the N-terminus, the 335-residue chain is Nucleoid-associated protein YejK (335 aa).

This sequence belongs to the YejK family.

The protein localises to the cytoplasm. Its subcellular location is the nucleoid. The protein is Nucleoid-associated protein YejK of Shigella flexneri.